A 298-amino-acid polypeptide reads, in one-letter code: uncharacterized protein (298 aa).

10 helical membrane-spanning segments follow: residues 5 to 25, 36 to 56, 76 to 96, 97 to 117, 124 to 144, 147 to 167, 181 to 201, 216 to 236, 244 to 264, and 272 to 292; these read ILFGVSMILLANLCFGIMSAF, MENVFYRSITMTLLLLLIYPF, VVVGGLAMLAFFYNIEKISLA, TATAFSQCAPIYTVLLSPLLL, SALISACIGLVGVVLISDPSV, VGLVEIIMGILSGIFVSLAYI, VILAFAFGMSLLGLAGMFIDI, ILWISLIGISGTLGQYFLTYA, IIAPIEYTRIVWGLLFGLYLG, and SSLGVALILCSGLLIALPALL. In terms of domain architecture, EamA 1 spans 17 to 141; sequence LCFGIMSAFV…GLVGVVLISD (125 aa). One can recognise an EamA 2 domain in the interval 183 to 288; the sequence is LAFAFGMSLL…ILCSGLLIAL (106 aa).

This sequence belongs to the EamA transporter family.

Its subcellular location is the cell membrane. This is an uncharacterized protein from Helicobacter pylori (strain J99 / ATCC 700824) (Campylobacter pylori J99).